We begin with the raw amino-acid sequence, 239 residues long: Lactate utilization protein A (239 aa).

It belongs to the LutA/YkgE family.

Its function is as follows. Is involved in L-lactate degradation and allows cells to grow with lactate as the sole carbon source. This Bacillus cereus (strain G9842) protein is Lactate utilization protein A.